We begin with the raw amino-acid sequence, 737 residues long: Amino-acid acetyltransferase, mitochondrial (737 aa).

The N-terminal 47 residues, 1–47 (MSRSTVLGWCTQSCRLLQKHDHSFSFPTFNGSPPLKKRRFCDSAAPA), are a transit peptide targeting the mitochondrion. A disordered region spans residues 43–78 (SAAPAAPRPSIHRPSEYIPHSKSGGEAPQDLGHKAR). Residues 558–727 (GEPALTLDDP…YEGVCRAIEP (170 aa)) enclose the N-acetyltransferase domain.

Belongs to the acetyltransferase family.

It is found in the mitochondrion. The catalysed reaction is L-glutamate + acetyl-CoA = N-acetyl-L-glutamate + CoA + H(+). It participates in amino-acid biosynthesis; L-arginine biosynthesis; N(2)-acetyl-L-ornithine from L-glutamate: step 1/4. N-acetylglutamate synthase involved in arginine biosynthesis. In Coccidioides immitis (strain RS) (Valley fever fungus), this protein is Amino-acid acetyltransferase, mitochondrial (ARG2).